The following is a 1099-amino-acid chain: Adenylate cyclase type 7 (1099 aa).

At 1-33 (MPAKGRYFLNEGDEGPDQAALYEKYRLTSLHGP) the chain is on the cytoplasmic side. 6 consecutive transmembrane segments (helical) span residues 34–54 (LLLL…SIAF), 63–83 (QVVL…YVLV), 95–117 (ALAL…DSLE), 122–142 (AWEQ…LLPL), 147–167 (AIVA…AVTR), and 178–198 (LGLQ…TGAF). The Cytoplasmic portion of the chain corresponds to 199–595 (HKHQLQDASR…YRLVPIPRAR (397 aa)). The Mg(2+) site is built by D286, I287, and D330. ATP contacts are provided by residues 286–291 (DIVGFT), 328–330 (LGD), and R374. Positions 456–476 (DPRSQQPPPPSHHLSKPKGDA) are disordered. Residues 479-484 (KMRASV) are mediates regulation of adenylate cyclase activity by C5 alpha-induced G- beta and gamma pathway. The segment at 493–501 (WGAARPFAH) is mediates regulation of adenylate cyclase activity by sphingosine 1-phosphate-induced G alpha 13 pathway. Residues 504 to 543 (HRESVSSSETPISNGRRQKAIPLRRHRAPDRSASPKGRLE) form a disordered region. The segment covering 508–518 (VSSSETPISNG) has biased composition (polar residues). The segment at 508-585 (VSSSETPISN…IFLEKGFERE (78 aa)) is modulates adenylate cyclase activity by modulating the binding of G(s)alpha to the high-affinity G(s)alpha binding site in 7C1a/7C2. A compositionally biased stretch (basic residues) spans 519 to 531 (RRQKAIPLRRHRA). 3 consecutive transmembrane segments (helical) span residues 596-616 (YDFA…LLVM), 621-641 (TLGV…SFCF), and 670-689 (LVLV…INMP). The N-linked (GlcNAc...) asparagine glycan is linked to N702. 3 consecutive transmembrane segments (helical) span residues 719–738 (LLPY…SVFL), 747–766 (MLLT…SPCW), and 813–833 (DLKI…ILLS). At 834 to 1099 (RQIDYYCRLD…TAKFQGLGLN (266 aa)) the chain is on the cytoplasmic side. ATP-binding positions include K950, 1029–1031 (DIW), 1036–1040 (NVASR), and K1076.

It belongs to the adenylyl cyclase class-4/guanylyl cyclase family. Requires Mg(2+) as cofactor. Mn(2+) serves as cofactor. Phosphorylated by PRKCD. Most abundant in heart, spleen and lung.

It is found in the membrane. It catalyses the reaction ATP = 3',5'-cyclic AMP + diphosphate. Its activity is regulated as follows. Activated by the G protein alpha subunit. Activated by the G protein beta and gamma subunit complex. Activated by GNA13 and GNA12. Ethanol and phorbol 12,13-dibutanoate significantly potentiate adenylate cyclase activity generated in response to the activation of the prostanoid receptor by the agonist prostaglandin E1(1-) in a PKC-dependent manner. Inhibited by lithium. In terms of biological role, catalyzes the formation of cAMP in response to activation of G protein-coupled receptors. Functions in signaling cascades activated namely by thrombin and sphingosine 1-phosphate and mediates regulation of cAMP synthesis through synergistic action of the stimulatory G alpha protein with GNA13. Also, during inflammation, mediates zymosan-induced increase intracellular cAMP, leading to protein kinase A pathway activation in order to modulate innate immune responses through heterotrimeric G proteins G(12/13). Functions in signaling cascades activated namely by dopamine and C5 alpha chain and mediates regulation of cAMP synthesis through synergistic action of the stimulatory G protein with G beta:gamma complex. Functions, through cAMP response regulation, to keep inflammation under control during bacterial infection by sensing the presence of serum factors, such as the bioactive lysophospholipid (LPA) that regulate LPS-induced TNF-alpha production. However, it is also required for the optimal functions of B and T cells during adaptive immune responses by regulating cAMP synthesis in both B and T cells. This chain is Adenylate cyclase type 7, found in Mus musculus (Mouse).